Consider the following 440-residue polypeptide: Chaperone SurA (440 aa).

An N-terminal signal peptide occupies residues 1–25; that stretch reads MGTKLSSRSPFSLPFLTLLAGMAIA. PpiC domains lie at 182-283 and 294-392; these read SDEY…KLVE and IDQT…QVIE.

It localises to the periplasm. The enzyme catalyses [protein]-peptidylproline (omega=180) = [protein]-peptidylproline (omega=0). Its function is as follows. Chaperone involved in the correct folding and assembly of outer membrane proteins. Recognizes specific patterns of aromatic residues and the orientation of their side chains, which are found more frequently in integral outer membrane proteins. May act in both early periplasmic and late outer membrane-associated steps of protein maturation. This chain is Chaperone SurA, found in Nitrosospira multiformis (strain ATCC 25196 / NCIMB 11849 / C 71).